We begin with the raw amino-acid sequence, 198 residues long: E3 ubiquitin-protein ligase rnf152 (198 aa).

An RING-type zinc finger spans residues 12-55 (CQICFNYFSQRRLPKLLHCQHTCCSVCLSQMRLSQREIRCPWCR). The helical transmembrane segment at 162-182 (TGVCTVLLVAFILIFLLGIVL) threads the bilayer.

This sequence belongs to the RNF152 family.

The protein localises to the lysosome membrane. It catalyses the reaction S-ubiquitinyl-[E2 ubiquitin-conjugating enzyme]-L-cysteine + [acceptor protein]-L-lysine = [E2 ubiquitin-conjugating enzyme]-L-cysteine + N(6)-ubiquitinyl-[acceptor protein]-L-lysine.. It functions in the pathway protein modification; protein ubiquitination. Functionally, E3 ubiquitin-protein ligase that acts as a negative regulator of mTORC1 signaling by mediating ubiquitination of RagA/RRAGA and RHEB. Catalyzes 'Lys-63'-linked polyubiquitination of RagA/RRAGA in response to amino acid starvation, thereby regulating mTORC1 signaling. Also mediates monoubiquitination of RHEB, promoting its association with the TSC-TBC complex and subsequent inhibition. Also mediates 'Lys-48'-linked polyubiquitination of target proteins and their subsequent targeting to the proteasome for degradation. The chain is E3 ubiquitin-protein ligase rnf152 from Danio rerio (Zebrafish).